We begin with the raw amino-acid sequence, 878 residues long: Alanine--tRNA ligase (878 aa).

Zn(2+) contacts are provided by H558, H562, C663, and H667.

The protein belongs to the class-II aminoacyl-tRNA synthetase family. It depends on Zn(2+) as a cofactor.

It is found in the cytoplasm. It catalyses the reaction tRNA(Ala) + L-alanine + ATP = L-alanyl-tRNA(Ala) + AMP + diphosphate. In terms of biological role, catalyzes the attachment of alanine to tRNA(Ala) in a two-step reaction: alanine is first activated by ATP to form Ala-AMP and then transferred to the acceptor end of tRNA(Ala). Also edits incorrectly charged Ser-tRNA(Ala) and Gly-tRNA(Ala) via its editing domain. This Mycoplasmopsis synoviae (strain 53) (Mycoplasma synoviae) protein is Alanine--tRNA ligase.